The primary structure comprises 94 residues: uncharacterized protein (94 aa).

Belongs to the phD/YefM antitoxin family.

This is an uncharacterized protein from Synechocystis sp. (strain ATCC 27184 / PCC 6803 / Kazusa).